Consider the following 323-residue polypeptide: o-succinylbenzoate synthase (323 aa).

K134 functions as the Proton donor in the catalytic mechanism. D162, E191, and D214 together coordinate Mg(2+). Residue K236 is the Proton acceptor of the active site.

The protein belongs to the mandelate racemase/muconate lactonizing enzyme family. MenC type 1 subfamily. Requires a divalent metal cation as cofactor.

The enzyme catalyses (1R,6R)-6-hydroxy-2-succinyl-cyclohexa-2,4-diene-1-carboxylate = 2-succinylbenzoate + H2O. It functions in the pathway quinol/quinone metabolism; 1,4-dihydroxy-2-naphthoate biosynthesis; 1,4-dihydroxy-2-naphthoate from chorismate: step 4/7. Its pathway is quinol/quinone metabolism; menaquinone biosynthesis. In terms of biological role, converts 2-succinyl-6-hydroxy-2,4-cyclohexadiene-1-carboxylate (SHCHC) to 2-succinylbenzoate (OSB). This is o-succinylbenzoate synthase from Edwardsiella ictaluri (strain 93-146).